Here is a 478-residue protein sequence, read N- to C-terminus: MNNSFTLKQQWFGNIRKDILAGILVALALIPEAIGFSIIAGVDPMVGLYASFCIAIIISIFGGRPGMISAATGSMAVVMVSLVADHGLQYLFAATILTGIIQVILGISKIARLMKFIPRSVMIGFVNALAILIFSAQLPQFEGASWSMYAMLAGSLVIIYVLPRFTTAVPSPLVAIIVMTIIAVTFHVDVRTVGDMGNISSSLPHFLIPDVPFTFETLQIIFPYSIALAFVGLLESLLTAQIIDEMTDTDSDKNKESRGQGIANIVTGFFGGMAGCAMIGQSVINTKAGGRGRLSAFVAGAFLMFLIAVLSHVVVKIPMAALVAVMVMVSVGTFDWSSLKGLKKAPLTDSIVMVVTVVTVVVTDDLSKGVFVGVLLSAVFFVAKISKLKIVSHAEDQKLRTYQVKGQIFFASVTDLTNAFIYQEDIERVVIDLTEAHVWDDSGAAALDKIVAKFKEQGIEAELKGLNKASKSLMKQMA.

12 helical membrane-spanning segments follow: residues I19–I39, V42–G62, P65–D85, G87–I107, V121–F141, G143–P163, A168–V188, I220–A240, G259–I279, S295–V315, A345–D365, and L366–S386. Residues K389–A478 form the STAS domain.

This sequence belongs to the SLC26A/SulP transporter (TC 2.A.53) family.

It localises to the cell membrane. This chain is Putative sulfate transporter YbaR (ybaR), found in Bacillus subtilis (strain 168).